We begin with the raw amino-acid sequence, 1488 residues long: DNA polymerase alpha catalytic subunit (1488 aa).

Disordered stretches follow at residues 1-22 (MSES…GRFA), 79-124 (LRDF…TGKA), and 236-325 (FFSS…ESED). Positions 83–93 (FEDEDEYSDGE) are enriched in acidic residues. Positions 96–103 (RKDSKKKK) match the Nuclear localization signal motif. The segment covering 99 to 113 (SKKKKGVAPNSKKRP) has biased composition (basic residues). Residue Ser239 is modified to Phosphoserine. Positions 242 to 258 (IKKEPMPEKTPAKKATE) are enriched in basic and acidic residues. Positions 260–278 (PFSDNEMDFSCLDDDENQF) are enriched in acidic residues. Phosphoserine occurs at positions 262 and 269. Positions 286 to 303 (TEKVSQTKTAAEKTSQSK) are enriched in polar residues. Positions 304–325 (VAEKSAPKKETTGSPKESESED) are enriched in basic and acidic residues. Thr314 carries the phosphothreonine modification. Ser317 bears the Phosphoserine mark. Residues 638 to 758 (DSERALLSWF…DLLEMYEKGE (121 aa)) form a contains conserved residues essential for 3' -&gt; 5' exonuclease activities region. DNA-binding regions lie at residues 675–734 (QIVA…CKQV) and 1255–1380 (PTKF…RKKS). The Zn(2+) site is built by Cys1296, Cys1299, Cys1324, Cys1329, Cys1362, Cys1367, Cys1385, and Cys1388. The CysA-type zinc finger occupies 1296-1327 (CVTCKTEQLMASAYRPGPSNSHIAVLQQCAKS). The short motif at 1362–1388 (CDHPDCNFNTRTHSLRKKSHRPLCQKC) is the CysB motif element.

Belongs to the DNA polymerase type-B family. Component of the alpha DNA polymerase complex (also known as the alpha DNA polymerase-primase complex) consisting of four subunits: the catalytic subunit PolA1, the regulatory subunit PolA2, and the primase complex subunits Prim1 and Prim2 respectively. PolA1 associates with the DNA primase complex before association with PolA2. Interacts with Dpit47; the interaction inhibits the activity of the DNA polymerase and occurs only in proliferating cells but not in quiescent cells. In embryos, a cleaved form of 130 kDa is produced up to cycle 14 and then disappears. As to expression, expressed in embryos (at protein level).

The protein resides in the nucleus. The enzyme catalyses DNA(n) + a 2'-deoxyribonucleoside 5'-triphosphate = DNA(n+1) + diphosphate. Its activity is regulated as follows. Inhibited by N2-(p-n-butylphenyl) deoxyguanosine 5'-triphosphate and N2-(p-n-butylphenyl) deoxyadenosine 5'-triphosphate. DNA synthesis is not inhibited by fungal toxin alpha-amaitin. The 3'-5' exonuclease activity is inhibited by 10mM dGMP. Its function is as follows. Catalytic subunit of the DNA polymerase alpha complex (also known as the alpha DNA polymerase-primase complex) which plays an essential role in the initiation of DNA synthesis. During the S phase of the cell cycle, the DNA polymerase alpha complex (composed of a catalytic subunit PolA1, an accessory subunit PolA2 and two primase subunits, the catalytic subunit Prim1 and the regulatory subunit Prim2) is recruited to DNA at the replicative forks. The primase subunit of the polymerase alpha complex initiates DNA synthesis by oligomerising short RNA primers on both leading and lagging strands. These primers are initially extended by the polymerase alpha catalytic subunit and subsequently transferred to polymerase delta and polymerase epsilon for processive synthesis on the lagging and leading strand, respectively. In addition to polymerase activity, exhibits 3' to 5' exonuclease activity. This chain is DNA polymerase alpha catalytic subunit, found in Drosophila melanogaster (Fruit fly).